We begin with the raw amino-acid sequence, 1048 residues long: Histone deacetylase complex subunit SAP130 (1048 aa).

The interval 1-95 (MGPPRHPQAG…LQSREEKQEP (95 aa)) is disordered. Positions 40 to 54 (TGLSQAPSQIANSGS) are enriched in polar residues. The span at 67–80 (ESGRDSEVSAREHM) shows a compositional bias: basic and acidic residues. Arg232 is modified (omega-N-methylarginine). Thr355 is subject to Phosphothreonine. Phosphoserine occurs at positions 442 and 465. Disordered stretches follow at residues 458 to 477 (PISG…RSDN), 576 to 617 (IGTP…PEGK), and 649 to 687 (QTHS…SEIH). Composition is skewed to polar residues over residues 590–613 (GIHS…QQPQ) and 649–667 (QTHS…SSPR). Lys785 participates in a covalent cross-link: Glycyl lysine isopeptide (Lys-Gly) (interchain with G-Cter in SUMO2). Positions 819 to 871 (LSMPTSDLPPGASPRKKPRKQQHVISTEEGDMMETNSTDDEKSTAKSLLVKAE) are disordered. Residues 836–1047 (PRKQQHVIST…KVSKLKRKEK (212 aa)) are interactions with SIN3A and HDAC1. At Ser855 the chain carries Phosphoserine. At Thr856 the chain carries Phosphothreonine. Residues Lys864 and Lys869 each participate in a glycyl lysine isopeptide (Lys-Gly) (interchain with G-Cter in SUMO2) cross-link. Phosphoserine is present on Ser875.

This sequence belongs to the SAP130 family. As to quaternary structure, component of a mSin3A corepressor complex that contains SIN3A, SAP130, SUDS3/SAP45, ARID4B/SAP180, HDAC1 and HDAC2. Interacts (released by dead or dying cells) with CLEC4E. In terms of processing, acetylated. Post-translationally, sumoylated with SUMO1. In terms of tissue distribution, expressed in various cancer cell ines.

It is found in the nucleus. In terms of biological role, acts as a transcriptional repressor. May function in the assembly and/or enzymatic activity of the mSin3A corepressor complex or in mediating interactions between the complex and other regulatory complexes. The chain is Histone deacetylase complex subunit SAP130 (SAP130) from Homo sapiens (Human).